The sequence spans 370 residues: Cysteine synthase 1 (370 aa).

A mitochondrion-targeting transit peptide spans 1 to 16 (MFRQSVRRFATAALRS). Lys-73 carries the N6-(pyridoxal phosphate)lysine modification. Pyridoxal 5'-phosphate-binding positions include Asn-103, 209–213 (GTGGT), and Ser-308.

It belongs to the cysteine synthase/cystathionine beta-synthase family. Pyridoxal 5'-phosphate is required as a cofactor.

The protein localises to the mitochondrion. The enzyme catalyses O-succinyl-L-serine + hydrogen sulfide = L-cysteine + succinate. The catalysed reaction is O-acetyl-L-serine + hydrogen sulfide = L-cysteine + acetate. Its pathway is amino-acid biosynthesis; L-cysteine biosynthesis; L-cysteine from L-serine: step 2/2. Functionally, catalyzes the conversion of O-succinyl-L-serine into cysteine, the last step in the cysteine biosynthesis pathway. Can also use O-acetyl-L-serine. The polypeptide is Cysteine synthase 1 (Emericella nidulans (strain FGSC A4 / ATCC 38163 / CBS 112.46 / NRRL 194 / M139) (Aspergillus nidulans)).